A 103-amino-acid chain; its full sequence is uncharacterized protein (103 aa).

Polar residues-rich tracts occupy residues 1 to 10 (MSNSCSTSSY) and 18 to 28 (TRSGSNVNRNY). The disordered stretch occupies residues 1–28 (MSNSCSTSSYPIRRKTPTRSGSNVNRNY).

This is an uncharacterized protein from Acanthamoeba polyphaga mimivirus (APMV).